The following is a 327-amino-acid chain: Undecaprenyl-phosphate 4-deoxy-4-formamido-L-arabinose transferase (327 aa).

2 consecutive transmembrane segments (helical) span residues leucine 236–valine 256 and valine 270–leucine 290.

Belongs to the glycosyltransferase 2 family.

It is found in the cell inner membrane. It catalyses the reaction UDP-4-deoxy-4-formamido-beta-L-arabinose + di-trans,octa-cis-undecaprenyl phosphate = 4-deoxy-4-formamido-alpha-L-arabinopyranosyl di-trans,octa-cis-undecaprenyl phosphate + UDP. It functions in the pathway glycolipid biosynthesis; 4-amino-4-deoxy-alpha-L-arabinose undecaprenyl phosphate biosynthesis; 4-amino-4-deoxy-alpha-L-arabinose undecaprenyl phosphate from UDP-4-deoxy-4-formamido-beta-L-arabinose and undecaprenyl phosphate: step 1/2. It participates in bacterial outer membrane biogenesis; lipopolysaccharide biosynthesis. Its function is as follows. Catalyzes the transfer of 4-deoxy-4-formamido-L-arabinose from UDP to undecaprenyl phosphate. The modified arabinose is attached to lipid A and is required for resistance to polymyxin and cationic antimicrobial peptides. The sequence is that of Undecaprenyl-phosphate 4-deoxy-4-formamido-L-arabinose transferase from Yersinia enterocolitica serotype O:8 / biotype 1B (strain NCTC 13174 / 8081).